Consider the following 169-residue polypeptide: Gastrula zinc finger protein XlCGF62.1 (169 aa).

6 consecutive C2H2-type zinc fingers follow at residues 6–28 (FICTECGKCFSEKRTLKHHIRTH), 34–56 (FICTDCGKCFSFEICLNRHYKTH), 62–84 (FICTECGKSFSDKSRLRVHHRSH), 90–113 (FTCTDCGKCFSVKSILNHHRQAIH), 119–141 (FICTECGKGFASKHYLHGHKRTH), and 147–169 (FVCTECGKGFASNYYLHVHKRTH).

It belongs to the krueppel C2H2-type zinc-finger protein family.

The protein localises to the nucleus. May be involved in transcriptional regulation. This chain is Gastrula zinc finger protein XlCGF62.1, found in Xenopus laevis (African clawed frog).